The following is a 294-amino-acid chain: N-acetylmuramic acid 6-phosphate etherase (294 aa).

Positions V54 to K217 constitute an SIS domain. E82 functions as the Proton donor in the catalytic mechanism. E113 is a catalytic residue.

It belongs to the GCKR-like family. MurNAc-6-P etherase subfamily. Homodimer.

The catalysed reaction is N-acetyl-D-muramate 6-phosphate + H2O = N-acetyl-D-glucosamine 6-phosphate + (R)-lactate. Its pathway is amino-sugar metabolism; N-acetylmuramate degradation. Specifically catalyzes the cleavage of the D-lactyl ether substituent of MurNAc 6-phosphate, producing GlcNAc 6-phosphate and D-lactate. The polypeptide is N-acetylmuramic acid 6-phosphate etherase (Bacillus thuringiensis subsp. konkukian (strain 97-27)).